Here is a 176-residue protein sequence, read N- to C-terminus: dCTP deaminase (176 aa).

Residues 102-107 (RSTFAR) and Asp-118 each bind dCTP. Residue Glu-128 is the Proton donor/acceptor of the active site. Residues Tyr-160 and Gln-167 each contribute to the dCTP site.

Belongs to the dCTP deaminase family. In terms of assembly, homotrimer.

The enzyme catalyses dCTP + H2O + H(+) = dUTP + NH4(+). Its pathway is pyrimidine metabolism; dUMP biosynthesis; dUMP from dCTP (dUTP route): step 1/2. Catalyzes the deamination of dCTP to dUTP. This Hyperthermus butylicus (strain DSM 5456 / JCM 9403 / PLM1-5) protein is dCTP deaminase.